We begin with the raw amino-acid sequence, 443 residues long: MYLPQEIIRKKRDNVELTADEINFFIQGIAKETMSEGQIAAFAMAIYFNDMTMDERVALTCAMRDSGMVIDWSHMNFDGPIVDKHSTGGVGDVTSLMLGPMVAACGGFVPMISGRGLGHTGGTLDKLESIPGYNITPTNDVFGQVTKDAGVAIIGQTGDLAPADKRVYATRDVTATVDNISLITASILSKKLAAGLGSLVMDVKVGSGAFMPTYEASEDLAKSIVAVANGAGTKTTALLTDMNQVLASTAGNALEVREAVQFLTGEYRNPRLFEVTMALCAEMLVNSGLASDIEQAREQLQAVLDNGKAATCFGKMVAGLGGPVDFMENYDNYLEKAEIAKPVFAETTGYAYAMDTRGLGMAVVGMGGGRRVASDSIDYAVGLSDMIRLGDEVNTDTALCVIHARSEAQWQEAANAVRANITIADEKPAPTPDVYRRIRAEDI.

The protein belongs to the thymidine/pyrimidine-nucleoside phosphorylase family. As to quaternary structure, homodimer.

It carries out the reaction thymidine + phosphate = 2-deoxy-alpha-D-ribose 1-phosphate + thymine. The protein operates within pyrimidine metabolism; dTMP biosynthesis via salvage pathway; dTMP from thymine: step 1/2. The enzymes which catalyze the reversible phosphorolysis of pyrimidine nucleosides are involved in the degradation of these compounds and in their utilization as carbon and energy sources, or in the rescue of pyrimidine bases for nucleotide synthesis. In Photobacterium profundum (strain SS9), this protein is Thymidine phosphorylase.